Reading from the N-terminus, the 805-residue chain is Zinc finger CCCH domain-containing protein 11B (805 aa).

2 consecutive C3H1-type zinc fingers follow at residues 2–29 (PNQG…HCEA) and 31–57 (LGNE…HMEI). Disordered stretches follow at residues 140 to 194 (KVES…GLRV), 223 to 351 (KKMK…DKVN), 364 to 433 (MLLE…TCIK), 449 to 468 (IVAS…SMQE), 481 to 506 (KALR…PGAR), and 715 to 805 (VTVP…PLEL). Acidic residues predominate over residues 160-175 (ADDDEDDDDQFSEEGD). Positions 364–390 (MLLERASQKHGESQTKLKTEGPSKTDD) are enriched in basic and acidic residues. Residues 391 to 402 (STSGARSSSTIR) show a composition bias toward polar residues. Residues 403–423 (IKTFSEVLAEEEHRQQEAERQ) adopt a coiled-coil conformation. Composition is skewed to basic and acidic residues over residues 412–433 (EEEH…TCIK) and 455–468 (QSEE…SMQE). Composition is skewed to low complexity over residues 486 to 498 (QQSS…SPSQ) and 730 to 749 (PPTQ…PSSS). Over residues 750–763 (QMSMKTRRLSSAST) the composition is skewed to polar residues. Acidic residues predominate over residues 789 to 805 (EIDLDPGKDEDDLPLEL).

In terms of biological role, may play a role in mRNA transport. This Homo sapiens (Human) protein is Zinc finger CCCH domain-containing protein 11B.